We begin with the raw amino-acid sequence, 99 residues long: Integration host factor subunit alpha (99 aa).

The segment at 49-73 (FGNFDLRDKNQRPGRNPKTGEDIPI) is disordered.

It belongs to the bacterial histone-like protein family. In terms of assembly, heterodimer of an alpha and a beta chain.

Functionally, this protein is one of the two subunits of integration host factor, a specific DNA-binding protein that functions in genetic recombination as well as in transcriptional and translational control. The polypeptide is Integration host factor subunit alpha (Shigella boydii serotype 18 (strain CDC 3083-94 / BS512)).